The primary structure comprises 363 residues: MMNGFGIKNNGEFYSVSLQFGAHKLCGSGRFSNVYCGQMISPIEKEVAVKNVWSDTETRHLATSEYPEIQILSKLFHPAISNLLYFYSRNANDKVINCLVLDYLPQDLARLRDQGVKFDVLDAKLYTFQLFCAISHLTSKNIVHMDIKPQNVVMDRMAGRLKLADFGNARRLETNEKTGSAYQVTRFYRPPELLFGCEKFTASIDIWSATCVAFELFANRVLFKGKDTKDQIVLITGVFGYPTDDDIKSIGVKRPRVARKDARGIETFTSKMLDSEIYDFMKATLKIDPKKRKSAIDVLKMPLFDILRSSPPKKRSNGVEMPNLASYTEMHHKREPETEVVADIQTTEKAEKESDSTNEELED.

The Protein kinase domain occupies 20-304 (FGAHKLCGSG…AIDVLKMPLF (285 aa)). ATP contacts are provided by residues 26–34 (CGSGRFSNV) and lysine 50. The Proton acceptor role is filled by aspartate 146. The disordered stretch occupies residues 311-363 (PPKKRSNGVEMPNLASYTEMHHKREPETEVVADIQTTEKAEKESDSTNEELED). Residues 346 to 355 (TTEKAEKESD) show a composition bias toward basic and acidic residues.

The protein belongs to the protein kinase superfamily. Ser/Thr protein kinase family. Expressed during multiple stages of spermatogenesis, in males and hermaphrodites (at protein level).

It localises to the cytoplasm. Its subcellular location is the cell projection. The protein resides in the pseudopodium. It catalyses the reaction L-seryl-[protein] + ATP = O-phospho-L-seryl-[protein] + ADP + H(+). It carries out the reaction L-threonyl-[protein] + ATP = O-phospho-L-threonyl-[protein] + ADP + H(+). May be an autophosphorylating tyrosine kinase, a bifunctional (serine/tyrosine-specific) protein kinase, or a serine kinase that is a substrate for an associated tyrosine kinase. Acting in concert with putative serine/threonine-protein kinase gskl-2, required for sister chromatid segregation and spermatid budding during male meiosis. Plays a role in regulating female meiosis II, together with gskl-2. Involved in sperm pseudopod formation and function, together with gskl-2. The chain is Putative serine/threonine-protein kinase gskl-1 from Caenorhabditis elegans.